A 72-amino-acid polypeptide reads, in one-letter code: Kappa-conotoxin PVIIA (72 aa).

A signal peptide spans 1 to 22 (MKLTCVVIVVVLFLTACQLITA). A propeptide spanning residues 23–45 (DDSRRTQKHRALRSTTKLSLSTR) is cleaved from the precursor. 3 cysteine pairs are disulfide-bonded: Cys46/Cys61, Cys53/Cys65, and Cys60/Cys71. Pro49 carries the post-translational modification 4-hydroxyproline.

Belongs to the conotoxin O1 superfamily. In terms of processing, this toxin is not amidated at the C-terminal Val residue. Expressed by the venom duct.

The protein localises to the secreted. Functionally, kappa-conotoxins bind and inhibit voltage-gated potassium channels (Kv). This toxin inhibits the drosophila Shaker channel (IC(50)=57-80 nM). In vivo, when tested in fish, this toxin induces hyperactivity, followed by continuous contraction and extension of major fins, without immobilization or death. Injection of this peptide together with the delta-conotoxin PVIA causes the sudden tetanus of prey (STOP) syndrome, which is a single, lethal 'fin-pop' in envenomed fish. When tested in mice, induces hyperactivity. This Conus purpurascens (Purple cone) protein is Kappa-conotoxin PVIIA.